Here is a 743-residue protein sequence, read N- to C-terminus: Threonine synthase-like 1 (743 aa).

An N6-acetyllysine modification is found at Lys281. Lys351 carries the N6-(pyridoxal phosphate)lysine modification.

It belongs to the threonine synthase family. Pyridoxal 5'-phosphate serves as cofactor.

The polypeptide is Threonine synthase-like 1 (THNSL1) (Pongo abelii (Sumatran orangutan)).